The primary structure comprises 178 residues: Cytochrome b6-f complex iron-sulfur subunit (178 aa).

A helical transmembrane segment spans residues 20-42; the sequence is LLTFGTATGVALGALYPVANYFM. Residues 65 to 161 enclose the Rieske domain; sequence KTGWLATHQA…VDIEDDAVLV (97 aa). [2Fe-2S] cluster is bound by residues cysteine 107, histidine 109, cysteine 125, and histidine 128. Cysteines 112 and 127 form a disulfide.

This sequence belongs to the Rieske iron-sulfur protein family. In terms of assembly, the 4 large subunits of the cytochrome b6-f complex are cytochrome b6, subunit IV (17 kDa polypeptide, PetD), cytochrome f and the Rieske protein, while the 4 small subunits are PetG, PetL, PetM and PetN. The complex functions as a dimer. It depends on [2Fe-2S] cluster as a cofactor.

It localises to the cellular thylakoid membrane. The catalysed reaction is 2 oxidized [plastocyanin] + a plastoquinol + 2 H(+)(in) = 2 reduced [plastocyanin] + a plastoquinone + 4 H(+)(out). In terms of biological role, component of the cytochrome b6-f complex, which mediates electron transfer between photosystem II (PSII) and photosystem I (PSI), cyclic electron flow around PSI, and state transitions. In Prochlorococcus marinus (strain MIT 9215), this protein is Cytochrome b6-f complex iron-sulfur subunit.